The following is a 522-amino-acid chain: Pectinesterase/pectinesterase inhibitor PPE8B (522 aa).

An N-terminal signal peptide occupies residues 1-30 (MPYLLMASHNPLPAGKQLLLLVLLCAFFSS). A pectinesterase inhibitor PPE8B region spans residues 31-174 (SFIPFASCSI…TSLVQELLTQ (144 aa)). Residues Asn-105, Asn-118, Asn-119, Asn-218, Asn-221, and Asn-274 are each glycosylated (N-linked (GlcNAc...) asparagine). Residues 208 to 506 (DAIVAQDGTG…YTVAQFIEGN (299 aa)) are pectinesterase PPE8B. Substrate contacts are provided by Thr-283 and Gln-313. Asp-336 functions as the Proton donor; for pectinesterase activity in the catalytic mechanism. A disulfide bridge links Cys-350 with Cys-370. The Nucleophile; for pectinesterase activity role is filled by Asp-357. N-linked (GlcNAc...) asparagine glycosylation is present at Asn-405. Arg-426 and Trp-428 together coordinate substrate. N-linked (GlcNAc...) asparagine glycans are attached at residues Asn-489 and Asn-496.

The protein in the N-terminal section; belongs to the PMEI family. It in the C-terminal section; belongs to the pectinesterase family.

The protein resides in the secreted. Its subcellular location is the cell wall. It carries out the reaction [(1-&gt;4)-alpha-D-galacturonosyl methyl ester](n) + n H2O = [(1-&gt;4)-alpha-D-galacturonosyl](n) + n methanol + n H(+). Its pathway is glycan metabolism; pectin degradation; 2-dehydro-3-deoxy-D-gluconate from pectin: step 1/5. Functionally, may have roles in the deposition of pectin in developing tissues and in the wall loosening and cell separation that occurs in cell expansion, fruit ripening and abscission. The protein is Pectinesterase/pectinesterase inhibitor PPE8B of Prunus persica (Peach).